The sequence spans 184 residues: MTDLVVTGRGSAPVADLISSLTRDVADFPKPGIQFKDLTPLFADREAMAAVIDALADIAAGTDLVAGIESRGSLVAAALAARLGTGVLSIRKSGKLPPPVLTEEYDREYGAASMEIPADSLELRGRSVMIIDDVLATGGTLGAATRLLKRTGARVTGAAVVVELTALRGREAIAPLRVHSLSRA.

It belongs to the purine/pyrimidine phosphoribosyltransferase family. Homodimer.

The protein resides in the cytoplasm. It carries out the reaction AMP + diphosphate = 5-phospho-alpha-D-ribose 1-diphosphate + adenine. The protein operates within purine metabolism; AMP biosynthesis via salvage pathway; AMP from adenine: step 1/1. In terms of biological role, catalyzes a salvage reaction resulting in the formation of AMP, that is energically less costly than de novo synthesis. The protein is Adenine phosphoribosyltransferase of Mycobacterium marinum (strain ATCC BAA-535 / M).